Consider the following 264-residue polypeptide: Hemin import ATP-binding protein HmuV (264 aa).

Residues 2–241 (IEVSGVSVRL…ETMLAVFGCA (240 aa)) enclose the ABC transporter domain. 34–41 (GPNGSGKT) serves as a coordination point for ATP.

It belongs to the ABC transporter superfamily. Heme (hemin) importer (TC 3.A.1.14.5) family. The complex is composed of two ATP-binding proteins (HmuV), two transmembrane proteins (HmuU) and a solute-binding protein (HmuT).

Its subcellular location is the cell inner membrane. Functionally, part of the ABC transporter complex HmuTUV involved in hemin import. Responsible for energy coupling to the transport system. The polypeptide is Hemin import ATP-binding protein HmuV (Rhizobium johnstonii (strain DSM 114642 / LMG 32736 / 3841) (Rhizobium leguminosarum bv. viciae)).